A 468-amino-acid chain; its full sequence is tRNA (guanine(37)-N(1))-methyltransferase 1 (468 aa).

Residues H207, 245–246, and 273–274 contribute to the S-adenosyl-L-methionine site; these read DL and DA. Positions 301-348 are disordered; the sequence is KEAAVSRGGETNSSGEEIRESNASINEPLGANKKPSGTTKTENGVGKD. The segment covering 309 to 325 has biased composition (polar residues); that stretch reads GETNSSGEEIRESNASI. N380 is an S-adenosyl-L-methionine binding site.

Belongs to the class I-like SAM-binding methyltransferase superfamily. TRM5/TYW2 family. In terms of assembly, monomer.

The protein resides in the mitochondrion matrix. Its subcellular location is the nucleus. It localises to the cytoplasm. It catalyses the reaction guanosine(37) in tRNA + S-adenosyl-L-methionine = N(1)-methylguanosine(37) in tRNA + S-adenosyl-L-homocysteine + H(+). In terms of biological role, specifically methylates the N1 position of guanosine-37 in various cytoplasmic and mitochondrial tRNAs. Methylation is not dependent on the nature of the nucleoside 5' of the target nucleoside. This is the first step in the biosynthesis of wybutosine (yW), a modified base adjacent to the anticodon of tRNAs and required for accurate decoding. The chain is tRNA (guanine(37)-N(1))-methyltransferase 1 from Arabidopsis thaliana (Mouse-ear cress).